The following is a 490-amino-acid chain: GTPase Der (490 aa).

2 consecutive EngA-type G domains span residues 3 to 166 (PVIA…PRDE) and 196 to 369 (IKIA…KSAV). Residues 9–16 (GRPNVGKS), 56–60 (DTGGI), 118–121 (NKID), 202–209 (GRPNVGKS), 249–253 (DTAGV), and 314–317 (NKWD) contribute to the GTP site. One can recognise a KH-like domain in the interval 370–454 (TRWPTSRLTQ…PIRIEFKGGE (85 aa)). A disordered region spans residues 452–490 (GGENPYEGNKNTLTDRQVNKKRRMMSHHKKADKKRRDKR). Residues 470–490 (NKKRRMMSHHKKADKKRRDKR) show a composition bias toward basic residues.

This sequence belongs to the TRAFAC class TrmE-Era-EngA-EngB-Septin-like GTPase superfamily. EngA (Der) GTPase family. As to quaternary structure, associates with the 50S ribosomal subunit.

In terms of biological role, GTPase that plays an essential role in the late steps of ribosome biogenesis. This chain is GTPase Der, found in Pseudomonas syringae pv. syringae (strain B728a).